The chain runs to 293 residues: 33 kDa chaperonin (293 aa).

Intrachain disulfides connect cysteine 237–cysteine 239 and cysteine 271–cysteine 274.

It belongs to the HSP33 family. Post-translationally, under oxidizing conditions two disulfide bonds are formed involving the reactive cysteines. Under reducing conditions zinc is bound to the reactive cysteines and the protein is inactive.

The protein localises to the cytoplasm. Functionally, redox regulated molecular chaperone. Protects both thermally unfolding and oxidatively damaged proteins from irreversible aggregation. Plays an important role in the bacterial defense system toward oxidative stress. The polypeptide is 33 kDa chaperonin (Haemophilus influenzae (strain 86-028NP)).